The following is a 431-amino-acid chain: Glutamate-1-semialdehyde 2,1-aminomutase (431 aa).

Lysine 269 is modified (N6-(pyridoxal phosphate)lysine).

Belongs to the class-III pyridoxal-phosphate-dependent aminotransferase family. HemL subfamily. As to quaternary structure, homodimer. Pyridoxal 5'-phosphate is required as a cofactor.

It localises to the cytoplasm. The enzyme catalyses (S)-4-amino-5-oxopentanoate = 5-aminolevulinate. It participates in porphyrin-containing compound metabolism; protoporphyrin-IX biosynthesis; 5-aminolevulinate from L-glutamyl-tRNA(Glu): step 2/2. This Tolumonas auensis (strain DSM 9187 / NBRC 110442 / TA 4) protein is Glutamate-1-semialdehyde 2,1-aminomutase.